Reading from the N-terminus, the 144-residue chain is 3-dehydroquinate dehydratase (144 aa).

Tyr-22 functions as the Proton acceptor in the catalytic mechanism. The substrate site is built by Asn-73, His-79, and Asp-86. Residue His-99 is the Proton donor of the active site. Substrate contacts are provided by residues 100-101 and Arg-110; that span reads LS.

The protein belongs to the type-II 3-dehydroquinase family. As to quaternary structure, homododecamer.

It carries out the reaction 3-dehydroquinate = 3-dehydroshikimate + H2O. Its pathway is metabolic intermediate biosynthesis; chorismate biosynthesis; chorismate from D-erythrose 4-phosphate and phosphoenolpyruvate: step 3/7. Functionally, catalyzes a trans-dehydration via an enolate intermediate. The protein is 3-dehydroquinate dehydratase of Trichlorobacter lovleyi (strain ATCC BAA-1151 / DSM 17278 / SZ) (Geobacter lovleyi).